We begin with the raw amino-acid sequence, 293 residues long: 4-diphosphocytidyl-2-C-methyl-D-erythritol kinase (293 aa).

Lys16 is a catalytic residue. Residue 99-109 participates in ATP binding; that stretch reads PMGAGLGGGSS. The active site involves Asp141.

The protein belongs to the GHMP kinase family. IspE subfamily.

It carries out the reaction 4-CDP-2-C-methyl-D-erythritol + ATP = 4-CDP-2-C-methyl-D-erythritol 2-phosphate + ADP + H(+). It functions in the pathway isoprenoid biosynthesis; isopentenyl diphosphate biosynthesis via DXP pathway; isopentenyl diphosphate from 1-deoxy-D-xylulose 5-phosphate: step 3/6. Functionally, catalyzes the phosphorylation of the position 2 hydroxy group of 4-diphosphocytidyl-2C-methyl-D-erythritol. This chain is 4-diphosphocytidyl-2-C-methyl-D-erythritol kinase, found in Paraburkholderia phytofirmans (strain DSM 17436 / LMG 22146 / PsJN) (Burkholderia phytofirmans).